An 805-amino-acid chain; its full sequence is Cation channel sperm-associated auxiliary subunit delta (805 aa).

The N-terminal stretch at 1 to 16 is a signal peptide; that stretch reads MLVLMLAAAVATMVRA. Residues 17–723 are Extracellular-facing; the sequence is HTLCRVHTVR…ALPVTKFQPL (707 aa). Disulfide bonds link Cys20-Cys366, Cys56-Cys143, Cys142-Cys149, Cys384-Cys493, Cys507-Cys701, Cys522-Cys569, and Cys621-Cys651. N-linked (GlcNAc...) asparagine glycans are attached at residues Asn227, Asn419, Asn469, Asn535, and Asn627. The chain crosses the membrane as a helical span at residues 724–745; that stretch reads LTILLMVTTTLLTAWLAYAIPK. Residues 746 to 805 are Cytoplasmic-facing; the sequence is QLRSEKGQRLLGFCYQILQLCLGVCFCTWLRGKLRQWLRPRRVKDQNRGKVRVAQKHPET.

This sequence belongs to the CATSPERD family. Component of the CatSper complex or CatSpermasome composed of the core pore-forming members CATSPER1, CATSPER2, CATSPER3 and CATSPER4 as well as auxiliary members CATSPERB, CATSPERG2, CATSPERD, CATSPERE, CATSPERZ, C2CD6/CATSPERT, SLCO6C1, TMEM249, TMEM262 and EFCAB9. HSPA1 may be an additional auxiliary complex member. The core complex members CATSPER1, CATSPER2, CATSPER3 and CATSPER4 form a heterotetrameric channel. The auxiliary CATSPERB, CATSPERG2, CATSPERD and CATSPERE subunits form a pavilion-like structure over the pore which stabilizes the complex through interactions with CATSPER4, CATSPER3, CATSPER1 and CATSPER2 respectively. SLCO6C1 interacts with CATSPERE and TMEM262/CATSPERH interacts with CATSPERB, further stabilizing the complex. C2CD6/CATSPERT interacts at least with CATSPERD and is required for targeting the CatSper complex in the flagellar membrane. In terms of tissue distribution, testis-specific.

The protein resides in the cell projection. It localises to the cilium. It is found in the flagellum membrane. Its function is as follows. Auxiliary component of the CatSper complex, a complex involved in sperm cell hyperactivation. Sperm cell hyperactivation is needed for sperm motility which is essential late in the preparation of sperm for fertilization. Required for CATSPER1 stability before intraflagellar transport and/or incorporation of the CatSper complex channel into the flagellar membrane. The polypeptide is Cation channel sperm-associated auxiliary subunit delta (Mus musculus (Mouse)).